A 938-amino-acid polypeptide reads, in one-letter code: Ankyrin repeat and LEM domain-containing protein 2 (938 aa).

The Lumenal segment spans residues 1-12; that stretch reads MLWPRLAAAEWA. Residues 13-32 traverse the membrane as a helical; Signal-anchor for type III membrane protein segment; it reads ALAWELLGASVLLIAVRWLV. Topologically, residues 33-938 are cytoplasmic; the sequence is RRLGPRPGGL…MARLAELAAL (906 aa). Residues 69–113 enclose the LEM domain; the sequence is LARLKLLNPDDLREEIVKAGLKCGPITSTTRFIFEKKLAQALLEQ. Serine 259 and serine 268 each carry phosphoserine. Residues 411 to 440 form an ANK repeat; sequence GYDTPLHFACKFGNADVVNVLSSHHLIVKN. 4 positions are modified to phosphoserine: serine 488, serine 496, serine 512, and serine 528. The span at 609–627 shows a compositional bias: basic and acidic residues; sequence GKKAQQETGEREASCRDKA. Positions 609–636 are disordered; sequence GKKAQQETGEREASCRDKATTSGSNSIS. Phosphoserine occurs at positions 662, 804, 896, and 914. Residues 870–924 are disordered; that stretch reads RQSWPSPAVKGRFKSQLPDLSGPHSYSPGRNSVAGSNPAKPGLGSPGRYSPVHGS.

The protein belongs to the ANKLE2 family. Interacts with BAF/BANF1. Interacts with protein phosphatase 2A (PP2A) components PPP2C (PPP2CA or PPP2CB) and PPP2R1A. As to quaternary structure, (Microbial infection) May interact with non-structural protein 4A/NS4A from Zika virus strains Mr-766 or French Polynesia 10087PF/2013; the interaction may inhibit ANKLE2 function and contribute to defects in brain development, such as microcephaly.

The protein localises to the endoplasmic reticulum membrane. Involved in mitotic nuclear envelope reassembly by promoting dephosphorylation of BAF/BANF1 during mitotic exit. Coordinates the control of BAF/BANF1 dephosphorylation by inhibiting VRK1 kinase and promoting dephosphorylation of BAF/BANF1 by protein phosphatase 2A (PP2A), thereby facilitating nuclear envelope assembly. May regulate nuclear localization of VRK1 in non-dividing cells. It is unclear whether it acts as a real PP2A regulatory subunit or whether it is involved in recruitment of the PP2A complex. Involved in brain development. This Homo sapiens (Human) protein is Ankyrin repeat and LEM domain-containing protein 2 (ANKLE2).